A 75-amino-acid chain; its full sequence is MMNKKRRKKKRVCQFCADKNAKIDYKSTQRLQKYITERGKILPRRISGTCAKHQRELTVAIKRARNIALLPYTLD.

This sequence belongs to the bacterial ribosomal protein bS18 family. As to quaternary structure, part of the 30S ribosomal subunit. Forms a tight heterodimer with protein bS6.

Functionally, binds as a heterodimer with protein bS6 to the central domain of the 16S rRNA, where it helps stabilize the platform of the 30S subunit. The chain is Small ribosomal subunit protein bS18 from Clostridioides difficile (strain 630) (Peptoclostridium difficile).